The primary structure comprises 336 residues: Ankyrin repeat and SOCS box protein 1 (336 aa).

ANK repeat units follow at residues 37–69 (CDDT…RINE), 78–107 (LPCT…EVDL), 111–140 (KGQT…DPNG), 144–173 (HRST…DVDV), 192–221 (LVVC…NPDF), and 236–266 (SPGC…NLNL). Residues 287-336 (LQVFKEARSIPRTLLSLCRVAVRRALGKYRLHLVPSLPLPDPIKKFLLYE) enclose the SOCS box domain.

This sequence belongs to the ankyrin SOCS box (ASB) family. In terms of assembly, interacts with CUL5 and RNF7. Highest expression in testis, spleen, bone marrow and salivary gland.

Its pathway is protein modification; protein ubiquitination. Its function is as follows. Probable substrate-recognition component of a SCF-like ECS (Elongin-Cullin-SOCS-box protein) E3 ligase complex which mediates the ubiquitination and subsequent proteasomal degradation of target proteins. Mediates Notch-induced ubiquitination and degradation of TCF3/E2A and JAK2. May play a role in testis development. The chain is Ankyrin repeat and SOCS box protein 1 (Asb1) from Mus musculus (Mouse).